A 290-amino-acid polypeptide reads, in one-letter code: GTPase Era (290 aa).

The region spanning 2-144 (KVLKVGVLGP…AIILEEFKPQ (143 aa)) is the Era-type G domain. The interval 10–17 (GPTNAGKS) is G1. 10–17 (GPTNAGKS) serves as a coordination point for GTP. Residues 36-40 (NTTLL) form a G2 region. The G3 stretch occupies residues 58–61 (DVPG). 58-62 (DVPGF) serves as a coordination point for GTP. Residues 97 to 100 (NKIE) are G4. Positions 121–123 (INK) are G5. Residue 122–125 (NKFH) coordinates GTP. Residues 201–279 (CKNEIPHIAR…FIDIFVKTEK (79 aa)) enclose the KH type-2 domain.

The protein belongs to the TRAFAC class TrmE-Era-EngA-EngB-Septin-like GTPase superfamily. Era GTPase family. Monomer.

It is found in the cytoplasm. It localises to the cell membrane. In terms of biological role, an essential GTPase that binds both GDP and GTP, with rapid nucleotide exchange. Plays a role in 16S rRNA processing and 30S ribosomal subunit biogenesis and possibly also in cell cycle regulation and energy metabolism. This Mycoplasma genitalium (strain ATCC 33530 / DSM 19775 / NCTC 10195 / G37) (Mycoplasmoides genitalium) protein is GTPase Era.